The sequence spans 493 residues: Ribulose bisphosphate carboxylase large chain (493 aa).

Position 132 (asparagine 132) interacts with substrate. Cysteine 181 carries the post-translational modification S-nitrosocysteine. Threonine 182 is a substrate binding site. Lysine 184 acts as the Proton acceptor in catalysis. Lysine 186 contacts substrate. Residues lysine 210, aspartate 212, and glutamate 213 each coordinate Mg(2+). Lysine 210 is modified (N6-carboxylysine). Catalysis depends on histidine 302, which acts as the Proton acceptor. Positions 303, 335, and 387 each coordinate substrate. Cysteine 460 is subject to S-nitrosocysteine.

Belongs to the RuBisCO large chain family. Type I subfamily. Heterohexadecamer of 8 large chains and 8 small chains. Mg(2+) serves as cofactor.

It is found in the plastid. The protein resides in the chloroplast. The catalysed reaction is 2 (2R)-3-phosphoglycerate + 2 H(+) = D-ribulose 1,5-bisphosphate + CO2 + H2O. It carries out the reaction D-ribulose 1,5-bisphosphate + O2 = 2-phosphoglycolate + (2R)-3-phosphoglycerate + 2 H(+). Its function is as follows. RuBisCO catalyzes two reactions: the carboxylation of D-ribulose 1,5-bisphosphate, the primary event in carbon dioxide fixation, as well as the oxidative fragmentation of the pentose substrate in the photorespiration process. Both reactions occur simultaneously and in competition at the same active site. Carbon dioxide and oxygen bind in the same pocket of the enzyme in a similar manner. This Galdieria sulphuraria (Red alga) protein is Ribulose bisphosphate carboxylase large chain.